A 380-amino-acid polypeptide reads, in one-letter code: Flap endonuclease 1-A (380 aa).

The tract at residues Met-1–Arg-105 is N-domain. Asp-34 is a Mg(2+) binding site. Arg-71 is a DNA binding site. Positions 87, 159, 161, 180, and 182 each coordinate Mg(2+). The segment at Ala-123–His-254 is I-domain. Glu-159 lines the DNA pocket. DNA is bound by residues Gly-232 and Asp-234. Asp-234 serves as a coordination point for Mg(2+). Positions Ser-336–Phe-344 are interaction with PCNA. Residues Ser-351–Lys-380 are disordered. The segment covering Lys-355–Thr-364 has biased composition (basic and acidic residues). Residues Ala-368 to Lys-380 are compositionally biased toward basic residues.

The protein belongs to the XPG/RAD2 endonuclease family. FEN1 subfamily. As to quaternary structure, interacts with PCNA. Three molecules of FEN1 bind to one PCNA trimer with each molecule binding to one PCNA monomer. PCNA stimulates the nuclease activity without altering cleavage specificity. Requires Mg(2+) as cofactor. Phosphorylated. Phosphorylation upon DNA damage induces relocalization to the nuclear plasma. As to expression, strongly expressed in proliferating tissues: root and shoot apical meristem, tiller bud, leaf, ligule primordia, marginal meristem of young leaves and panicles. Not expressed in mature leaves when exposed to UV.

The protein localises to the nucleus. It is found in the nucleolus. The protein resides in the nucleoplasm. It localises to the mitochondrion. Its activity is regulated as follows. Inhibited by NaCl. In terms of biological role, structure-specific nuclease with 5'-flap endonuclease and 5'-3' exonuclease activities involved in DNA replication and repair. During DNA replication, cleaves the 5'-overhanging flap structure that is generated by displacement synthesis when DNA polymerase encounters the 5'-end of a downstream Okazaki fragment. It enters the flap from the 5'-end and then tracks to cleave the flap base, leaving a nick for ligation. Also involved in the long patch base excision repair (LP-BER) pathway, by cleaving within the apurinic/apyrimidinic (AP) site-terminated flap. Acts as a genome stabilization factor that prevents flaps from equilibrating into structures that lead to duplications and deletions. Also possesses 5'-3' exonuclease activity on nicked or gapped double-stranded DNA, and exhibits RNase H activity. Also involved in replication and repair of rDNA and in repairing mitochondrial DNA. May be required for cell proliferation. This chain is Flap endonuclease 1-A, found in Oryza sativa subsp. japonica (Rice).